The sequence spans 318 residues: NADH-ubiquinone oxidoreductase chain 1 (318 aa).

Helical transmembrane passes span 2–22, 76–96, 102–122, 146–166, 171–191, 217–237, 253–273, and 294–314; these read FMIN…FLTL, TLAL…YPLI, LLFI…SGWA, LAII…STLI, YLWL…STLA, AGPF…MNAL, ETYT…FLWV, and LPLT…ASCI.

Belongs to the complex I subunit 1 family. As to quaternary structure, core subunit of respiratory chain NADH dehydrogenase (Complex I) which is composed of 45 different subunits.

Its subcellular location is the mitochondrion inner membrane. It catalyses the reaction a ubiquinone + NADH + 5 H(+)(in) = a ubiquinol + NAD(+) + 4 H(+)(out). In terms of biological role, core subunit of the mitochondrial membrane respiratory chain NADH dehydrogenase (Complex I) which catalyzes electron transfer from NADH through the respiratory chain, using ubiquinone as an electron acceptor. Essential for the catalytic activity and assembly of complex I. In Lemur catta (Ring-tailed lemur), this protein is NADH-ubiquinone oxidoreductase chain 1 (MT-ND1).